Consider the following 179-residue polypeptide: Large ribosomal subunit protein uL6 (179 aa).

This sequence belongs to the universal ribosomal protein uL6 family. In terms of assembly, part of the 50S ribosomal subunit.

Functionally, this protein binds to the 23S rRNA, and is important in its secondary structure. It is located near the subunit interface in the base of the L7/L12 stalk, and near the tRNA binding site of the peptidyltransferase center. The chain is Large ribosomal subunit protein uL6 from Treponema pallidum (strain Nichols).